Reading from the N-terminus, the 473-residue chain is Cysteine--tRNA ligase (473 aa).

Zn(2+) is bound at residue C33. The 'HIGH' region signature appears at 35 to 45 (ATVQGQPHIGH). The Zn(2+) site is built by C211, H236, and E240. Residues 267-271 (KMSKS) carry the 'KMSKS' region motif. K270 is an ATP binding site.

It belongs to the class-I aminoacyl-tRNA synthetase family. As to quaternary structure, monomer. Requires Zn(2+) as cofactor.

The protein localises to the cytoplasm. The enzyme catalyses tRNA(Cys) + L-cysteine + ATP = L-cysteinyl-tRNA(Cys) + AMP + diphosphate. The polypeptide is Cysteine--tRNA ligase (Mycobacterium leprae (strain Br4923)).